A 101-amino-acid chain; its full sequence is Chaperone modulatory protein CbpM (101 aa).

The protein belongs to the CbpM family.

Functionally, interacts with CbpA and inhibits both the DnaJ-like co-chaperone activity and the DNA binding activity of CbpA. Together with CbpA, modulates the activity of the DnaK chaperone system. Does not inhibit the co-chaperone activity of DnaJ. The sequence is that of Chaperone modulatory protein CbpM from Pseudomonas putida (strain ATCC 700007 / DSM 6899 / JCM 31910 / BCRC 17059 / LMG 24140 / F1).